The sequence spans 630 residues: SHC-transforming protein 4 (630 aa).

The tract at residues 1 to 185 is CH2; the sequence is MRERGQDSLA…RQDRHFLQHL (185 aa). Disordered stretches follow at residues 39–80 and 118–150; these read TSLD…QESP and KLQE…QQDL. Low complexity predominate over residues 125–142; the sequence is PGSSGPSSPETSLSRSGT. Positions 186-369 constitute a PID domain; it reads LGMGMNYCVR…VHIDSHAEER (184 aa). The segment at 370–525 is CH1; sequence EDHEYYNEIP…HIKQQLWSEE (156 aa). The residue at position 424 (Tyr424) is a Phosphotyrosine. Composition is skewed to polar residues over residues 471-486 and 502-513; these read LQST…SAQP and PGATAQPASSHS. The tract at residues 471–514 is disordered; that stretch reads LQSTPGSAGNQRSAQPLGSPWHCGKAPETVQPGATAQPASSHSL. Positions 526–617 constitute an SH2 domain; sequence CYHGKLSRKA…GSEVSLKQPV (92 aa).

As to quaternary structure, interacts (via PID domain) with phosphorylated MUSK (via NPXY motif); undergoes tyrosine phosphorylation downstream of activated MUSK. Interacts with GRB2; the interaction is dependent of Tyr-424 phosphorylation and increased by EGF. Phosphorylated; the phosphorylation is enhanced by EGF. Phosphorylation at Tyr-424 is required for the interaction with GRB2. In terms of tissue distribution, only expressed in melanomas. Weakly expressed in normal melanocytes and benign nevi. Highly expressed at the transition from radial growth phase to vertical growth phase and metastatic melanomas, when tumor cells acquire migratory competence and invasive potential.

The protein localises to the postsynaptic cell membrane. Activates both Ras-dependent and Ras-independent migratory pathways in melanomas. Contributes to the early phases of agrin-induced tyrosine phosphorylation of CHRNB1. The sequence is that of SHC-transforming protein 4 (SHC4) from Homo sapiens (Human).